A 599-amino-acid polypeptide reads, in one-letter code: Ecdysone oxidase (599 aa).

Residues Asn-137–Val-140 and Trp-537–His-538 contribute to the FAD site. His-538 (proton acceptor) is an active-site residue.

This sequence belongs to the GMC oxidoreductase family. It depends on FAD as a cofactor.

It catalyses the reaction ecdysone + O2 = 3-dehydroecdysone + H2O2. Its function is as follows. Involved in the inactivation of ecdysteroid molting hormones by converting ecdysteroids into 3-dehydroecdysteroids. This Spodoptera littoralis (Egyptian cotton leafworm) protein is Ecdysone oxidase.